Consider the following 92-residue polypeptide: Probable Fe(2+)-trafficking protein (92 aa).

Belongs to the Fe(2+)-trafficking protein family.

Functionally, could be a mediator in iron transactions between iron acquisition and iron-requiring processes, such as synthesis and/or repair of Fe-S clusters in biosynthetic enzymes. This chain is Probable Fe(2+)-trafficking protein, found in Shewanella halifaxensis (strain HAW-EB4).